Here is a 358-residue protein sequence, read N- to C-terminus: Forkhead box protein I1c (358 aa).

Positions 1–13 (MNSIHLPSHQRTS) are enriched in polar residues. Disordered stretches follow at residues 1–25 (MNSI…PKGA) and 191–255 (DNGN…PSGI). Positions 106–200 (RPPYSYSALI…DNGNFRRKRK (95 aa)) form a DNA-binding region, fork-head.

It is found in the nucleus. Functionally, probable transcription factor. The chain is Forkhead box protein I1c from Xenopus tropicalis (Western clawed frog).